The following is a 442-amino-acid chain: UDP-N-acetylmuramoylalanine--D-glutamate ligase (442 aa).

113–119 (GSNGKTT) provides a ligand contact to ATP.

Belongs to the MurCDEF family.

Its subcellular location is the cytoplasm. It catalyses the reaction UDP-N-acetyl-alpha-D-muramoyl-L-alanine + D-glutamate + ATP = UDP-N-acetyl-alpha-D-muramoyl-L-alanyl-D-glutamate + ADP + phosphate + H(+). The protein operates within cell wall biogenesis; peptidoglycan biosynthesis. Cell wall formation. Catalyzes the addition of glutamate to the nucleotide precursor UDP-N-acetylmuramoyl-L-alanine (UMA). The protein is UDP-N-acetylmuramoylalanine--D-glutamate ligase of Coxiella burnetii (strain CbuG_Q212) (Coxiella burnetii (strain Q212)).